We begin with the raw amino-acid sequence, 66 residues long: MKMSALFPIFGLPLLFCNSFAAELKATGRGCGGLMDGCDGKSTFCCSGFNCSPTWKWCVYARPGRR.

The signal sequence occupies residues 1 to 21; sequence MKMSALFPIFGLPLLFCNSFA. Positions 22–29 are excised as a propeptide; the sequence is AELKATGR. Cystine bridges form between Cys31–Cys46, Cys38–Cys51, and Cys45–Cys58. Proline amide is present on Pro63.

Belongs to the neurotoxin 10 (Hwtx-1) family. 46 (Jztx-7/10/12) subfamily. As to expression, expressed by the venom gland.

The protein localises to the secreted. Its function is as follows. Probable ion channel inhibitor. The sequence is that of U1-theraphotoxin-Cg1d 2 from Chilobrachys guangxiensis (Chinese earth tiger tarantula).